The following is a 520-amino-acid chain: RNA polymerase sigma factor sigA (520 aa).

Residues 1-66 constitute a chloroplast transit peptide; it reads MTATPAVIGL…APATPKLTAV (66 aa). Over residues 37 to 49 the composition is skewed to gly residues; it reads GGGGGGGGGGGGD. Disordered regions lie at residues 37–57, 87–117, and 171–190; these read GGGG…APPA, HHSS…AHAH, and SVSA…TKNG. Positions 96 to 108 are enriched in pro residues; the sequence is APPPPPPPPPTPS. Basic residues predominate over residues 175–187; it reads RQRRMSGRRRGRT. The Polymerase core binding signature appears at 305–318; that stretch reads DLIQGGLIGLLRGI. Residues 479–498 constitute a DNA-binding region (H-T-H motif); sequence WEDISRQFGLSRERVRQVGL.

This sequence belongs to the sigma-70 factor family. Expressed in shoots. Expressed in the tips of fully elongated leaves. Expressed in leaf blades.

It is found in the plastid. It localises to the chloroplast. Its function is as follows. Sigma factors are initiation factors that promote the attachment of plastid-encoded RNA polymerase (PEP) to specific initiation sites and are then released. Controls the transcription of the psaA and psaB genes in chloroplast, and thus maintains the abundance of the core protein complex PsaA-PsaB of photosystem I (PSI) in the thylakoid membrane. Maintains PSI activity, sufficient rate of electron transfer from PSII to PSI, and photochemical efficiency. This is RNA polymerase sigma factor sigA from Oryza sativa subsp. japonica (Rice).